The primary structure comprises 364 residues: Putative serine/threonine-protein phosphatase C06A1.3 (364 aa).

A disordered region spans residues 1 to 24 (MSTDGNNNKKGSKEGPKSSEISKF). Residues 11–24 (GSKEGPKSSEISKF) show a composition bias toward basic and acidic residues. D93, H95, D121, and N153 together coordinate Mn(2+). H154 serves as the catalytic Proton donor. Residues H202 and H277 each coordinate Mn(2+).

Belongs to the PPP phosphatase family. PP-1 subfamily. It depends on Mn(2+) as a cofactor.

The enzyme catalyses O-phospho-L-seryl-[protein] + H2O = L-seryl-[protein] + phosphate. It carries out the reaction O-phospho-L-threonyl-[protein] + H2O = L-threonyl-[protein] + phosphate. The sequence is that of Putative serine/threonine-protein phosphatase C06A1.3 from Caenorhabditis elegans.